The sequence spans 286 residues: MSRFSVLSFLILAIFLGGSIVKGDVSFRLSGADPRSYGMFIKDLRNALPFREKVYNIPLLLPSVSGAGRYLLMHLFNYDGKTITVAVDVTNVYIMGYLADTTSYFFNEPAAELASQYVFRDARRKITLPYSGNYERLQIAAGKPREKIPIGLPALDSAISTLLHYDSTAAAGALLVLIQTTAEAARFKYIEQQIQERAYRDEVPSLATISLENSWSGLSKQIQLAQGNNGIFRTPIVLVDNKGNRVQITNVTSKVVTSNIQLLLNTRNIAEGDNGDVSTTHGFSSY.

An N-terminal signal peptide occupies residues 1–23 (MSRFSVLSFLILAIFLGGSIVKG). The active site involves E183. N250 carries an N-linked (GlcNAc...) asparagine glycan. A propeptide spans 270–286 (AEGDNGDVSTTHGFSSY) (removed in mature form).

Belongs to the ribosome-inactivating protein family. Type 1 RIP subfamily.

It carries out the reaction Endohydrolysis of the N-glycosidic bond at one specific adenosine on the 28S rRNA.. The protein is Ribosome-inactivating protein momordin I of Momordica charantia (Bitter gourd).